Reading from the N-terminus, the 284-residue chain is MNWITNFVRPRINSVFGRRAIPENLWVKCPETGAMVYHKDLKENQWVISSSDFHMKIPAKERLKFLFDNAKYCLLDQPQVCQDPLKFRDNKKYIDRLKENRSKTGLIDSIVSAVGNVRDFKLVAVVHEFSFIGGSIGIAAGEAIVKSCERAIAEKCPLVMFTASGGARMQEGILSLMQLPRTTIAINMLKDAGLPYIVVLTNPTTGGVTASYAMLGDIHLAEPGAEIGFAGRRVIEQTVREKLPDGFQRSEYLVEHGMIDRIVHRHDIPEVVSSLCKILTKSVQ.

Positions 25 to 284 (LWVKCPETGA…LCKILTKSVQ (260 aa)) constitute a CoA carboxyltransferase N-terminal domain.

The protein belongs to the AccD/PCCB family. Acetyl-CoA carboxylase is a heterohexamer composed of biotin carboxyl carrier protein (AccB), biotin carboxylase (AccC) and two subunits each of ACCase subunit alpha (AccA) and ACCase subunit beta (AccD).

It is found in the cytoplasm. The enzyme catalyses N(6)-carboxybiotinyl-L-lysyl-[protein] + acetyl-CoA = N(6)-biotinyl-L-lysyl-[protein] + malonyl-CoA. The protein operates within lipid metabolism; malonyl-CoA biosynthesis; malonyl-CoA from acetyl-CoA: step 1/1. Functionally, component of the acetyl coenzyme A carboxylase (ACC) complex. Biotin carboxylase (BC) catalyzes the carboxylation of biotin on its carrier protein (BCCP) and then the CO(2) group is transferred by the transcarboxylase to acetyl-CoA to form malonyl-CoA. This is Acetyl-coenzyme A carboxylase carboxyl transferase subunit beta from Liberibacter asiaticus (strain psy62).